An 80-amino-acid polypeptide reads, in one-letter code: Putative membrane protein insertion efficiency factor (80 aa).

Residues 61–80 are disordered; that stretch reads KTGKDPVPDHFSLKRNQEGE. Positions 62 to 80 are enriched in basic and acidic residues; it reads TGKDPVPDHFSLKRNQEGE.

Belongs to the UPF0161 family.

The protein localises to the cell membrane. Could be involved in insertion of integral membrane proteins into the membrane. The sequence is that of Putative membrane protein insertion efficiency factor from Streptococcus pneumoniae (strain 70585).